Reading from the N-terminus, the 279-residue chain is Complement component 1 Q subcomponent-binding protein, mitochondrial (279 aa).

The N-terminal 71 residues, 1-71, are a transit peptide targeting the mitochondrion; sequence MLPLLRCVPR…PVPCACGCGA (71 aa). Residues 74-91 form a C1q binding region; that stretch reads TEGDKAFVEFLTDEIKEE. K89 and K92 each carry N6-acetyllysine. The interval 134-162 is disordered; that stretch reads NNSIPPTFDGEEEPSQGQKAEEQEPELTS. The interaction with MAVS stretch occupies residues 166–210; it reads FVVEVTKTDGKKTLVLDCHYPEDEIGHEDEAESDIFSIKEVSFQT. A Phosphotyrosine modification is found at Y185. S198 and S202 each carry phosphoserine. T211 is subject to Phosphothreonine.

Belongs to the MAM33 family. Homotrimer; three monomers form a donut-shaped structure with an unusually asymmetric charge distribution on the surface. Interacts with CDK13, HRK, VTN, NFYB, ADRA1B, FOXC1, DDX21, DDX50, NCL, SRSF1 and SRSF9. Interacts with CD93; the association may represent a cell surface C1q receptor. Interacts with KRT1; the association represents a cell surface kininogen receptor. Interacts with CD209; the interaction is indicative for a C1q:C1QBP:CD209 signaling complex. Interacts with FBL and RRP1; the respective interactions with C1QBP are competitive. Probably associates with the mitoribosome. Interacts with MAVS; the interaction occurs upon viral transfection. Interacts with PPIF. Interacts with U2AF1L4. Interacts with PLEKHN1. Interacts with VGF-derived peptide TLQP-21. Interacts with MRE11 and RAD50; forming the MRC (MRE11-RAD50-C1QBP) complex that inhibits the activity of MRE11. In terms of tissue distribution, ubiquitous.

It localises to the mitochondrion matrix. The protein resides in the nucleus. The protein localises to the cell membrane. It is found in the secreted. Its subcellular location is the cytoplasm. It localises to the nucleolus. Its function is as follows. Multifunctional and multicompartmental protein involved in inflammation and infection processes, ribosome biogenesis, protein synthesis in mitochondria, regulation of apoptosis, transcriptional regulation and pre-mRNA splicing. At the cell surface is thought to act as an endothelial receptor for plasma proteins of the complement and kallikrein-kinin cascades. Putative receptor for C1q; specifically binds to the globular 'heads' of C1q thus inhibiting C1; may perform the receptor function through a complex with C1qR/CD93. In complex with cytokeratin-1/KRT1 is a high affinity receptor for kininogen-1/HMWK. Can also bind other plasma proteins, such as coagulation factor XII leading to its autoactivation. May function to bind initially fluid kininogen-1 to the cell membrane. The secreted form may enhance both extrinsic and intrinsic coagulation pathways. It is postulated that the cell surface form requires docking with transmembrane proteins for downstream signaling which might be specific for a cell-type or response. By acting as C1q receptor is involved in chemotaxis of immature dendritic cells and neutrophils and is proposed to signal through CD209/DC-SIGN on immature dendritic cells, through integrin alpha-4/beta-1 during trophoblast invasion of the decidua, and through integrin beta-1 during endothelial cell adhesion and spreading. Signaling involved in inhibition of innate immune response is implicating the PI3K-AKT/PKB pathway. Required for protein synthesis in mitochondria. In mitochondrial translation may be involved in formation of functional 55S mitoribosomes; the function seems to involve its RNA-binding activity. Acts as a RNA modification reader, which specifically recognizes and binds mitochondrial RNAs modified by C5-methylcytosine (m5C) in response to stress, and promotes recruitment of the mitochondrial degradosome complex, leading to their degradation. May be involved in the nucleolar ribosome maturation process; the function may involve the exchange of FBL for RRP1 in the association with pre-ribosome particles. Involved in regulation of RNA splicing by inhibiting the RNA-binding capacity of SRSF1 and its phosphorylation. Is required for the nuclear translocation of splicing factor U2AF1L4. Involved in regulation of CDKN2A- and HRK-mediated apoptosis. Stabilizes mitochondrial CDKN2A isoform smARF. May be involved in regulation of FOXC1 transcriptional activity and NFY/CCAAT-binding factor complex-mediated transcription. May play a role in antibacterial defense as it can bind to cell surface hyaluronan and inhibit Streptococcus pneumoniae hyaluronate lyase. May be involved in modulation of the immune response; ligation by HCV core protein is resulting in suppression of interleukin-12 production in monocyte-derived dendritic cells. Involved in regulation of antiviral response by inhibiting RIGI- and IFIH1-mediated signaling pathways probably involving its association with MAVS after viral infection. Acts as a regulator of DNA repair via homologous recombination by inhibiting the activity of MRE11: interacts with unphosphorylated MRE11 and RAD50 in absence of DNA damage, preventing formation and activity of the MRN complex. Following DNA damage, dissociates from phosphorylated MRE11, allowing formation of the MRN complex. The polypeptide is Complement component 1 Q subcomponent-binding protein, mitochondrial (C1qbp) (Rattus norvegicus (Rat)).